Here is a 176-residue protein sequence, read N- to C-terminus: CASP-like protein 5A1 (176 aa).

Over 1–35 (MNPSHPAVHPVEAPPTDVHHAPRVRMKDYQGMPGT) the chain is Cytoplasmic. A helical membrane pass occupies residues 36–56 (LGGLALRLGQFCFAVVAFSIM). At 57–67 (LSTDDFSTVTA) the chain is on the extracellular side. Residues 68-88 (FCYLVAATVLQCLWSLALAVI) form a helical membrane-spanning segment. At 89-102 (DGYALLVKRSLRNS) the chain is on the cytoplasmic side. Residues 103 to 123 (LVVSLFVVGDGVTATLTFAAA) traverse the membrane as a helical segment. Residues 124–152 (CASAGITVLIGNDLRECDQNHCGKYETAT) lie on the Extracellular side of the membrane. Residues 153 to 173 (AMAFLSWFMVSPSFLLTFWLL) traverse the membrane as a helical segment. The Cytoplasmic segment spans residues 174 to 176 (ASR).

Belongs to the Casparian strip membrane proteins (CASP) family. Homodimer and heterodimers.

It localises to the cell membrane. The polypeptide is CASP-like protein 5A1 (Ginkgo biloba (Ginkgo)).